Consider the following 206-residue polypeptide: Thymidylate kinase (206 aa).

An ATP-binding site is contributed by 11-18 (GIDGAGKT).

It belongs to the thymidylate kinase family.

It catalyses the reaction dTMP + ATP = dTDP + ADP. Phosphorylation of dTMP to form dTDP in both de novo and salvage pathways of dTTP synthesis. This is Thymidylate kinase from Burkholderia mallei (strain NCTC 10247).